Consider the following 177-residue polypeptide: CDP-diacylglycerol--serine O-phosphatidyltransferase (177 aa).

Helical transmembrane passes span 4–24 (IPCM…HSLL), 28–48 (IHSA…DGMA), 77–97 (MLAY…CALT), 116–136 (LPTF…ILSF), and 140–160 (PILL…KIKF).

This sequence belongs to the CDP-alcohol phosphatidyltransferase class-I family.

The protein localises to the cell membrane. The enzyme catalyses a CDP-1,2-diacyl-sn-glycerol + L-serine = a 1,2-diacyl-sn-glycero-3-phospho-L-serine + CMP + H(+). This is CDP-diacylglycerol--serine O-phosphatidyltransferase (pssA) from Bacillus subtilis (strain 168).